The following is a 485-amino-acid chain: Warthog protein 1 (485 aa).

Residues 1–21 form the signal peptide; it reads MMVMNPLTATFLAALIGTAAS. Positions 236–258 are disordered; the sequence is DQRLSPSTDVQSDSYVSPTEADP. The segment covering 239–252 has biased composition (polar residues); the sequence is LSPSTDVQSDSYVS.

The protein belongs to the hedgehog family. The C-terminal domain displays an autoproteolysis activity.

It is found in the secreted. Its subcellular location is the cell surface. The protein localises to the cell membrane. The protein resides in the extracellular space. Intercellular signal essential for a variety of patterning events during development. This is Warthog protein 1 (wrt-1) from Caenorhabditis elegans.